A 316-amino-acid polypeptide reads, in one-letter code: MTNEFHHITVLLHETVDQLAVKPDGIYVDATLGGAGHSEYLLSQLGDEGHLYAFDQDQTAIDNAKKRLAPYVERGMVTFIKDNFRHLKSRLQEAGVEEIDGICYDLGVSSPQLDQRERGFSYKQDAPLDMRMNREAALTAFEVVNHYSYQDLVRIFFKYGEDKFSKQIARKIEQARSVKPIETTTELAEIIKSAKPAKELKKKGHPAKQIFQAIRIEVNDELGAADESIQQAIDLLAVDGRIAVITFHSLEDRLTKQLFKEASTVDVPKGLPFIPDELQPKLELVSRKPILPSKEELESNNRAHSAKLRVARKIHK.

S-adenosyl-L-methionine-binding positions include 35-37 (AGH), Asp-55, Phe-84, Asp-105, and Gln-112.

The protein belongs to the methyltransferase superfamily. RsmH family.

Its subcellular location is the cytoplasm. It catalyses the reaction cytidine(1402) in 16S rRNA + S-adenosyl-L-methionine = N(4)-methylcytidine(1402) in 16S rRNA + S-adenosyl-L-homocysteine + H(+). Specifically methylates the N4 position of cytidine in position 1402 (C1402) of 16S rRNA. In Streptococcus sanguinis (strain SK36), this protein is Ribosomal RNA small subunit methyltransferase H.